The following is a 242-amino-acid chain: 4-hydroxy-tetrahydrodipicolinate reductase (242 aa).

Residues 8-13 (GAKGRM), 75-77 (GTT), and 99-102 (ATNM) contribute to the NAD(+) site. The active-site Proton donor/acceptor is the H131. H132 contributes to the (S)-2,3,4,5-tetrahydrodipicolinate binding site. The active-site Proton donor is K135. 141-142 (GT) contacts (S)-2,3,4,5-tetrahydrodipicolinate.

This sequence belongs to the DapB family.

It localises to the cytoplasm. The catalysed reaction is (S)-2,3,4,5-tetrahydrodipicolinate + NAD(+) + H2O = (2S,4S)-4-hydroxy-2,3,4,5-tetrahydrodipicolinate + NADH + H(+). It carries out the reaction (S)-2,3,4,5-tetrahydrodipicolinate + NADP(+) + H2O = (2S,4S)-4-hydroxy-2,3,4,5-tetrahydrodipicolinate + NADPH + H(+). The protein operates within amino-acid biosynthesis; L-lysine biosynthesis via DAP pathway; (S)-tetrahydrodipicolinate from L-aspartate: step 4/4. Catalyzes the conversion of 4-hydroxy-tetrahydrodipicolinate (HTPA) to tetrahydrodipicolinate. This is 4-hydroxy-tetrahydrodipicolinate reductase from Campylobacter jejuni subsp. jejuni serotype O:6 (strain 81116 / NCTC 11828).